The chain runs to 377 residues: Odorant receptor 30a (377 aa).

At 1-34 the chain is on the cytoplasmic side; sequence MELKSMDPVEMPIFGSTLKLMKFWSYLFVHNWRR. Residues 35–55 form a helical membrane-spanning segment; it reads YVAMTPYIIINCTQYVDIYLS. The Extracellular segment spans residues 56-65; sequence TESLDFIIRN. The helical transmembrane segment at 66–86 threads the bilayer; it reads VYLAVLFTNTVVRGVLLCVQR. Topologically, residues 87 to 127 are cytoplasmic; sequence FSYERFINILKSFYIELLQSDDPIINILVKETTRLSVLISR. A helical membrane pass occupies residues 128–148; sequence INLLMGCCTCIGFVTYPIFGS. Over 149-172 the chain is Extracellular; sequence ERVLPYGMYLPTIDEYKYASPYYE. The chain crosses the membrane as a helical span at residues 173–193; that stretch reads IFFVIQAIMAPMGCCMYIPYT. At 194–254 the chain is on the cytoplasmic side; that stretch reads NMVVTFTLFA…SMNALNTHLH (61 aa). A helical membrane pass occupies residues 255–275; that stretch reads LVEFLCFGAMLCVLLFSLIIA. The Extracellular portion of the chain corresponds to 276 to 280; it reads QTIAQ. Residues 281 to 301 traverse the membrane as a helical segment; that stretch reads TVIVIAYMVMIFANSVVLYYV. Over 302–344 the chain is Cytoplasmic; that stretch reads ANELYFQSFDIAIAAYESNWMDFDVDTQKTLKFLIMRSQKPLA. The chain crosses the membrane as a helical span at residues 345–365; that stretch reads ILVGGTYPMNLKMLQSLLNAI. The Extracellular portion of the chain corresponds to 366 to 377; sequence YSFFTLLRRVYG.

It belongs to the insect chemoreceptor superfamily. Heteromeric odorant receptor channel (TC 1.A.69) family. Or30a subfamily. In terms of assembly, interacts with Orco. Complexes exist early in the endomembrane system in olfactory sensory neurons (OSNs), coupling these complexes to the conserved ciliary trafficking pathway.

The protein localises to the cell membrane. Functionally, odorant receptor which mediates acceptance or avoidance behavior, depending on its substrates. The odorant receptor repertoire encodes a large collection of odor stimuli that vary widely in identity, intensity, and duration. May form a complex with Orco to form odorant-sensing units, providing sensitive and prolonged odorant signaling and calcium permeability. Involved in the behavioral responses to propyl acetate and anisole. This is Odorant receptor 30a (Or30a) from Drosophila melanogaster (Fruit fly).